Reading from the N-terminus, the 245-residue chain is MRVGVLGARGKVGATMVAAVEAAEDLTFSAGVDAGDDLSLLTESKTEVVIDFTHPDVVMDNLKFVIDNGIHAVVGTTGFTWERIEQVEAWVKAKPGASVLIAPNFAIGAVLSMHFAKQAAKYFESVEIIELHHPHKADAPSGTAARTAKLIAEARKGLPPNPDATSTGLDGARGADVDGIPVHSVRLAGLVAHQEVLFGTQGETLTIRHDSLDRTSFVPGVLLAVRKISGLQGLTVGIEPLLDLS.

NAD(+)-binding positions include 7 to 12 (GARGKV), 75 to 77 (GTT), and 102 to 105 (APNF). The Proton donor/acceptor role is filled by His132. His133 is a binding site for (S)-2,3,4,5-tetrahydrodipicolinate. The active-site Proton donor is Lys136. 142-143 (GT) is a (S)-2,3,4,5-tetrahydrodipicolinate binding site.

Belongs to the DapB family.

Its subcellular location is the cytoplasm. The enzyme catalyses (S)-2,3,4,5-tetrahydrodipicolinate + NAD(+) + H2O = (2S,4S)-4-hydroxy-2,3,4,5-tetrahydrodipicolinate + NADH + H(+). It catalyses the reaction (S)-2,3,4,5-tetrahydrodipicolinate + NADP(+) + H2O = (2S,4S)-4-hydroxy-2,3,4,5-tetrahydrodipicolinate + NADPH + H(+). Its pathway is amino-acid biosynthesis; L-lysine biosynthesis via DAP pathway; (S)-tetrahydrodipicolinate from L-aspartate: step 4/4. In terms of biological role, catalyzes the conversion of 4-hydroxy-tetrahydrodipicolinate (HTPA) to tetrahydrodipicolinate. The protein is 4-hydroxy-tetrahydrodipicolinate reductase of Mycolicibacterium smegmatis (strain ATCC 700084 / mc(2)155) (Mycobacterium smegmatis).